Reading from the N-terminus, the 359-residue chain is (2E,6E)-farnesyl diphosphate synthase (359 aa).

The disordered stretch occupies residues 1–21 (MRGTDEKYGLPPQPDSDRMTR). K73, R76, and H105 together coordinate isopentenyl diphosphate. 2 residues coordinate Mg(2+): D112 and D116. A DDXXD motif motif is present at residues 112 to 116 (DDLMD). (2E)-geranyl diphosphate is bound at residue R121. R122 is a binding site for isopentenyl diphosphate. (2E)-geranyl diphosphate-binding residues include K201, T202, and Q239. The DDXXD motif signature appears at 242–246 (DDLLG). (2E)-geranyl diphosphate-binding residues include K256 and K266.

Belongs to the FPP/GGPP synthase family. Mg(2+) serves as cofactor.

Its subcellular location is the cytoplasm. It catalyses the reaction isopentenyl diphosphate + (2E)-geranyl diphosphate = (2E,6E)-farnesyl diphosphate + diphosphate. Its pathway is isoprenoid biosynthesis; farnesyl diphosphate biosynthesis; farnesyl diphosphate from geranyl diphosphate and isopentenyl diphosphate. Catalyzes the condensation of isopentenyl pyrophosphate (IPP) with geranyl diphosphate (GPP) to yield (2E,6E)-farnesyl diphosphate (E,E-FPP). May be used for squalene and possibly sterol biosynthesis. This Mycobacterium bovis (strain ATCC BAA-935 / AF2122/97) protein is (2E,6E)-farnesyl diphosphate synthase.